The primary structure comprises 1032 residues: Phosphoenolpyruvate carboxylase 4 (1032 aa).

Residue H154 is part of the active site. A disordered region spans residues 377 to 407 (PNLQKQNEQDFSESDWEKIDNGSRSGLTSRG). The segment covering 398 to 407 (GSRSGLTSRG) has biased composition (polar residues). Residue K699 is part of the active site.

This sequence belongs to the PEPCase type 1 family. As to quaternary structure, homotetramer. Requires Mg(2+) as cofactor. In terms of tissue distribution, expressed at low levels in flowers and siliques, and detectable in roots.

Its subcellular location is the cytoplasm. It carries out the reaction oxaloacetate + phosphate = phosphoenolpyruvate + hydrogencarbonate. Functionally, through the carboxylation of phosphoenolpyruvate (PEP) it forms oxaloacetate, a four-carbon dicarboxylic acid source for the tricarboxylic acid cycle. The chain is Phosphoenolpyruvate carboxylase 4 (PPC4) from Arabidopsis thaliana (Mouse-ear cress).